The following is a 309-amino-acid chain: 5-formyl-3-hydroxy-2-methylpyridine 4-carboxylate 5-dehydrogenase (309 aa).

NAD(+) is bound by residues Thr12–Met13, Asp32, Val87–Glu89, and Lys94.

Belongs to the 3-hydroxyacyl-CoA dehydrogenase family. Homodimer.

It carries out the reaction 5-formyl-3-hydroxy-2-methylpyridine-4-carboxylate + NAD(+) + H2O = 5-hydroxy-6-methylpyridine-3,4-dicarboxylate + NADH + 2 H(+). It catalyses the reaction 5-formyl-3-hydroxy-2-methylpyridine-4-carboxylate + NADH + H(+) = 4-pyridoxate + NAD(+). It functions in the pathway cofactor degradation; B6 vitamer degradation. In terms of biological role, involved in the degradation of pyridoxine (vitamin B(6)). Catalyzes the oxidation of 5-formyl-3-hydroxy-2-methylpyridine-4-carboxylate (FHMPC) by NAD(+) to 5-hydroxy-6-methylpyridine-3,4-dicarboxylate (HMPDC). Can also catalyze the reduction of FHMPC by NADH to 4-pyridoxic acid. In Mesorhizobium japonicum (strain LMG 29417 / CECT 9101 / MAFF 303099) (Mesorhizobium loti (strain MAFF 303099)), this protein is 5-formyl-3-hydroxy-2-methylpyridine 4-carboxylate 5-dehydrogenase.